The sequence spans 198 residues: Glycerol-3-phosphate acyltransferase (198 aa).

A run of 4 helical transmembrane segments spans residues 4 to 24 (TYLL…LVVG), 71 to 91 (LPMI…AVLG), 113 to 133 (LLCY…TLLF), and 147 to 167 (VVAV…AMCL).

This sequence belongs to the PlsY family. Probably interacts with PlsX.

It is found in the cell membrane. The enzyme catalyses an acyl phosphate + sn-glycerol 3-phosphate = a 1-acyl-sn-glycero-3-phosphate + phosphate. It functions in the pathway lipid metabolism; phospholipid metabolism. Functionally, catalyzes the transfer of an acyl group from acyl-phosphate (acyl-PO(4)) to glycerol-3-phosphate (G3P) to form lysophosphatidic acid (LPA). This enzyme utilizes acyl-phosphate as fatty acyl donor, but not acyl-CoA or acyl-ACP. The sequence is that of Glycerol-3-phosphate acyltransferase from Bacillus cereus (strain G9842).